The primary structure comprises 502 residues: Maturase K (502 aa).

It belongs to the intron maturase 2 family. MatK subfamily.

The protein resides in the plastid. It is found in the chloroplast. In terms of biological role, usually encoded in the trnK tRNA gene intron. Probably assists in splicing its own and other chloroplast group II introns. The chain is Maturase K from Arabis blepharophylla (Coast rock-cress).